We begin with the raw amino-acid sequence, 508 residues long: Lysine--tRNA ligase (508 aa).

Residues E418 and E425 each contribute to the Mg(2+) site.

This sequence belongs to the class-II aminoacyl-tRNA synthetase family. Homodimer. The cofactor is Mg(2+).

The protein resides in the cytoplasm. It carries out the reaction tRNA(Lys) + L-lysine + ATP = L-lysyl-tRNA(Lys) + AMP + diphosphate. This chain is Lysine--tRNA ligase, found in Burkholderia vietnamiensis (strain G4 / LMG 22486) (Burkholderia cepacia (strain R1808)).